Reading from the N-terminus, the 175-residue chain is Regenerating islet-derived protein 3-beta (175 aa).

The first 26 residues, 1 to 26, serve as a signal peptide directing secretion; that stretch reads MLPPTACSVMSWMLLSCLMLLSQVQG. A propeptide spanning residues 27-37 is cleaved from the precursor; it reads EDSLKNIPSAR. Cystine bridges form between C40/C51, C68/C171, and C146/C163. In terms of domain architecture, C-type lectin spans 47–172; it reads YGSYCYALFQ…CEVKLPYVCK (126 aa). Zn(2+) is bound at residue H107. An EPN motif is present at residues 114 to 116; it reads EPN. Residue E121 participates in Zn(2+) binding.

As to quaternary structure, forms a hexameric membrane-permeabilizing oligomeric pore on membrane phospholipids. The hexamer is formed by three dimers related by helical symmetry. Forms filaments, filamentation traps pore complexes and limits damage to host cells. Interacts with EXTL3. In terms of processing, proteolytic processing by trypsin removes an inhibitory N-terminal propeptide and is essential for peptidoglycan binding and antibacterial activity. In terms of tissue distribution, constitutively expressed in the small intestine, moderately in colon and at an extremely low level in healthy pancreas.

The protein resides in the secreted. With respect to regulation, lipopolysaccharide inhibits pore-forming activity, explaining why is bactericidal for Gram-positive but not Gram-negative bacteria. Functionally, bactericidal C-type lectin which acts against several intestinal Gram-positive and Gram-negative bacteria. Lacks antibacterial activity against S.typhimurium. May play a role in protection against infection with S.enteritidis by inhibiting its translocation from the gut lumen into intestinal tissues and further extraintestinal tissues. Its function is as follows. Acts as a hormone in response to different stimuli. Secreted by different cell types to activate its receptor EXTL3 and induce cell specific signaling pathways. In pancreas, is able stimulate cell proliferation. This Mus musculus (Mouse) protein is Regenerating islet-derived protein 3-beta.